The primary structure comprises 285 residues: 4-diphosphocytidyl-2-C-methyl-D-erythritol kinase (285 aa).

Lys-10 is an active-site residue. Residue 92–102 coordinates ATP; the sequence is PFGAGLGGGSS. Asp-134 is a catalytic residue.

The protein belongs to the GHMP kinase family. IspE subfamily.

The enzyme catalyses 4-CDP-2-C-methyl-D-erythritol + ATP = 4-CDP-2-C-methyl-D-erythritol 2-phosphate + ADP + H(+). Its pathway is isoprenoid biosynthesis; isopentenyl diphosphate biosynthesis via DXP pathway; isopentenyl diphosphate from 1-deoxy-D-xylulose 5-phosphate: step 3/6. In terms of biological role, catalyzes the phosphorylation of the position 2 hydroxy group of 4-diphosphocytidyl-2C-methyl-D-erythritol. The sequence is that of 4-diphosphocytidyl-2-C-methyl-D-erythritol kinase from Chloroherpeton thalassium (strain ATCC 35110 / GB-78).